A 263-amino-acid chain; its full sequence is N-acyl homoserine lactonase AttM (263 aa).

H103, H105, D107, H108, H180, D202, and H247 together coordinate Zn(2+).

It belongs to the metallo-beta-lactamase superfamily. Zn(2+) serves as cofactor.

The catalysed reaction is an N-acyl-L-homoserine lactone + H2O = an N-acyl-L-homoserine + H(+). The protein is N-acyl homoserine lactonase AttM of Azorhizobium caulinodans (strain ATCC 43989 / DSM 5975 / JCM 20966 / LMG 6465 / NBRC 14845 / NCIMB 13405 / ORS 571).